Reading from the N-terminus, the 332-residue chain is MAKIYTDKDVSLDVIKEKRVAVLGYGSQGRAWALNLRDSGIKVSVGLEREGNSWKQAENDGFKPLRTEEAVRNSDIIIFLLPDMIQRTVYLERVKPYLKEGMDLVFAHGFNIHYRLIEPPSNVDVYMIAPKAPGPIVREYFAKGGGVPALVATYQDHSGKALQKALAVAKAIGATRAGVIETTFKEETETDLFGEQVDLVGGVMQLMRYAFQTLVEAGYQPEVAYFETINEMKLIVDLVYEKGFSGMLTAVSDTAKYGGMTVGKMVIDESVKERMKKALDNIRSGKFAEKWVEEYGKGANTIKEGMKEVDNSTEEKVGRSLRDIILRGKPKS.

In terms of domain architecture, KARI N-terminal Rossmann spans 2–182 (AKIYTDKDVS…GATRAGVIET (181 aa)). NADP(+) is bound by residues 25 to 28 (YGSQ), S53, and 83 to 86 (DMIQ). Residue H108 is part of the active site. G134 lines the NADP(+) pocket. In terms of domain architecture, KARI C-terminal knotted spans 183–328 (TFKEETETDL…RSLRDIILRG (146 aa)). Mg(2+) contacts are provided by D191, E195, E227, and E231. S252 lines the substrate pocket.

It belongs to the ketol-acid reductoisomerase family. The cofactor is Mg(2+).

It catalyses the reaction (2R)-2,3-dihydroxy-3-methylbutanoate + NADP(+) = (2S)-2-acetolactate + NADPH + H(+). It carries out the reaction (2R,3R)-2,3-dihydroxy-3-methylpentanoate + NADP(+) = (S)-2-ethyl-2-hydroxy-3-oxobutanoate + NADPH + H(+). Its pathway is amino-acid biosynthesis; L-isoleucine biosynthesis; L-isoleucine from 2-oxobutanoate: step 2/4. It participates in amino-acid biosynthesis; L-valine biosynthesis; L-valine from pyruvate: step 2/4. Its function is as follows. Involved in the biosynthesis of branched-chain amino acids (BCAA). Catalyzes an alkyl-migration followed by a ketol-acid reduction of (S)-2-acetolactate (S2AL) to yield (R)-2,3-dihydroxy-isovalerate. In the isomerase reaction, S2AL is rearranged via a Mg-dependent methyl migration to produce 3-hydroxy-3-methyl-2-ketobutyrate (HMKB). In the reductase reaction, this 2-ketoacid undergoes a metal-dependent reduction by NADPH to yield (R)-2,3-dihydroxy-isovalerate. The polypeptide is Ketol-acid reductoisomerase (NADP(+)) (Sulfolobus acidocaldarius (strain ATCC 33909 / DSM 639 / JCM 8929 / NBRC 15157 / NCIMB 11770)).